Here is a 417-residue protein sequence, read N- to C-terminus: UDP-N-acetylglucosamine 1-carboxyvinyltransferase 3 (417 aa).

Residue 22-23 (KN) coordinates phosphoenolpyruvate. Residue R92 coordinates UDP-N-acetyl-alpha-D-glucosamine. C116 serves as the catalytic Proton donor. The residue at position 116 (C116) is a 2-(S-cysteinyl)pyruvic acid O-phosphothioketal. Residues 121 to 125 (RPIDQ), D304, and I326 each bind UDP-N-acetyl-alpha-D-glucosamine.

This sequence belongs to the EPSP synthase family. MurA subfamily.

Its subcellular location is the cytoplasm. The enzyme catalyses phosphoenolpyruvate + UDP-N-acetyl-alpha-D-glucosamine = UDP-N-acetyl-3-O-(1-carboxyvinyl)-alpha-D-glucosamine + phosphate. The protein operates within cell wall biogenesis; peptidoglycan biosynthesis. Functionally, cell wall formation. Adds enolpyruvyl to UDP-N-acetylglucosamine. The polypeptide is UDP-N-acetylglucosamine 1-carboxyvinyltransferase 3 (Caldanaerobacter subterraneus subsp. tengcongensis (strain DSM 15242 / JCM 11007 / NBRC 100824 / MB4) (Thermoanaerobacter tengcongensis)).